Reading from the N-terminus, the 160-residue chain is Protein-export protein SecB (160 aa).

Belongs to the SecB family. In terms of assembly, homotetramer, a dimer of dimers. One homotetramer interacts with 1 SecA dimer.

Its subcellular location is the cytoplasm. In terms of biological role, one of the proteins required for the normal export of preproteins out of the cell cytoplasm. It is a molecular chaperone that binds to a subset of precursor proteins, maintaining them in a translocation-competent state. It also specifically binds to its receptor SecA. The protein is Protein-export protein SecB of Orientia tsutsugamushi (strain Boryong) (Rickettsia tsutsugamushi).